The chain runs to 379 residues: MESEFQQHHFLLHDHQHQRPRNSGLIRYQSAPSSYFSSFGESIEEFLDRPTSPETERILSGFLQTTDTSDNVDSFLHHTFNSDGTEKKPPEVKTEDEDAEIPVTATATAMEVVVSGDGEISVNPEVSIGYVASVSRNKRPREKDDRTPVNNLARHNSSPAGLFSSIDVETAYAAVMKSMGGFGGSNVMSTSNTEASSLTPRSKLLPPTSRAMSPISEVDVKPGFSSRLPPRTLSGGFNRSFGNEGSASSKLTALARTQSGGLDQYKTKDEDSASRRPPLAHHMSLPKSLSDIEQLLSDSIPCKIRAKRGCATHPRSIAERVRRTKISERMRKLQDLVPNMDTQTNTADMLDLAVQYIKDLQEQVKALEESRARCRCSSA.

Residues M1–H17 are compositionally biased toward basic and acidic residues. A disordered region spans residues M1–R21. At S74 the chain carries Phosphoserine. 3 disordered regions span residues T79 to D98, S133 to N156, and T190 to P286. Residues G84–K93 are compositionally biased toward basic and acidic residues. A compositionally biased stretch (polar residues) spans T190–P200. Phosphoserine is present on residues S213 and S234. Positions G235 to G261 are enriched in polar residues. The segment covering Y265 to S274 has biased composition (basic and acidic residues). Residues C310–L360 form the bHLH domain.

In terms of assembly, homodimer.

The protein localises to the nucleus. The chain is Transcription factor bHLH122 (BHLH122) from Arabidopsis thaliana (Mouse-ear cress).